A 320-amino-acid polypeptide reads, in one-letter code: tRNA(Ile)-lysidine synthase (320 aa).

An ATP-binding site is contributed by 33-38 (SGGPDS).

The protein belongs to the tRNA(Ile)-lysidine synthase family.

The protein localises to the cytoplasm. It catalyses the reaction cytidine(34) in tRNA(Ile2) + L-lysine + ATP = lysidine(34) in tRNA(Ile2) + AMP + diphosphate + H(+). Its function is as follows. Ligates lysine onto the cytidine present at position 34 of the AUA codon-specific tRNA(Ile) that contains the anticodon CAU, in an ATP-dependent manner. Cytidine is converted to lysidine, thus changing the amino acid specificity of the tRNA from methionine to isoleucine. This is tRNA(Ile)-lysidine synthase from Mycolicibacterium paratuberculosis (strain ATCC BAA-968 / K-10) (Mycobacterium paratuberculosis).